The following is a 109-amino-acid chain: Protein reprimo (109 aa).

Residues N7 and N18 are each glycosylated (N-linked (GlcNAc...) asparagine). A helical membrane pass occupies residues V56–L76. A Phosphoserine modification is found at S98.

Belongs to the reprimo family.

It is found in the cytoplasm. The protein localises to the membrane. In terms of biological role, may be involved in the regulation of p53-dependent G2 arrest of the cell cycle. Seems to induce cell cycle arrest by inhibiting CDK1 activity and nuclear translocation of the CDC2 cyclin B1 complex. This is Protein reprimo (Rprm) from Rattus norvegicus (Rat).